Consider the following 301-residue polypeptide: GTPase Era (301 aa).

The Era-type G domain maps to Lys-4–Pro-173. The interval Gly-12 to Ser-19 is G1. Gly-12 to Ser-19 serves as a coordination point for GTP. Residues Asn-38–Lys-42 are G2. The tract at residues Asp-64–Gly-67 is G3. GTP contacts are provided by residues Asp-64–Leu-68 and Ser-122–Asp-125. Residues Ser-122–Asp-125 are G4. The segment at Leu-152–Ala-154 is G5. The 77-residue stretch at Leu-204–Lys-280 folds into the KH type-2 domain.

The protein belongs to the TRAFAC class TrmE-Era-EngA-EngB-Septin-like GTPase superfamily. Era GTPase family. As to quaternary structure, monomer.

The protein resides in the cytoplasm. It localises to the cell inner membrane. Its function is as follows. An essential GTPase that binds both GDP and GTP, with rapid nucleotide exchange. Plays a role in 16S rRNA processing and 30S ribosomal subunit biogenesis and possibly also in cell cycle regulation and energy metabolism. This chain is GTPase Era, found in Helicobacter pylori (strain Shi470).